The chain runs to 336 residues: Protein-arginine N-acetylglucosaminyltransferase SseK1 (336 aa).

A glycan (N-beta-linked (GlcNAc) arginine; by autocatalysis) is linked at Arg-24. UDP-N-acetyl-alpha-D-glucosamine is bound by residues 50–52 (QWF) and Tyr-74. N-beta-linked (GlcNAc) arginine; by autocatalysis glycosylation occurs at Arg-152. The DXD motif signature appears at 223–225 (DAD). 224–225 (AD) is a binding site for UDP-N-acetyl-alpha-D-glucosamine. Asp-225 serves as a coordination point for Mn(2+). The active-site Proton acceptor is the Glu-255. Asn-322 and Ser-324 together coordinate Mn(2+). UDP-N-acetyl-alpha-D-glucosamine-binding residues include Ser-324 and Ser-329. Residue Arg-333 is glycosylated (N-beta-linked (GlcNAc) arginine; by autocatalysis).

The protein belongs to the glycosyltransferase NleB family. The cofactor is Mn(2+). Auto-glycosylated: arginine GlcNAcylation is required for activity toward death domain-containing host target proteins.

The protein localises to the secreted. It is found in the host cytoplasm. It localises to the host cytosol. The enzyme catalyses L-arginyl-[protein] + UDP-N-acetyl-alpha-D-glucosamine = N(omega)-(N-acetyl-beta-D-glucosaminyl)-L-arginyl-[protein] + UDP + H(+). Its activity is regulated as follows. Protein-arginine N-acetylglucosaminyltransferase activity is inhibited by 100066N compound (flavone analog) and 102644N compound (a substituted isoxazole). In terms of biological role, protein-arginine N-acetylglucosaminyltransferase effector that disrupts TNF signaling in infected cells, including NF-kappa-B signaling, apoptosis and necroptosis. Acts by catalyzing the transfer of a single N-acetylglucosamine (GlcNAc) to a conserved arginine residue in the death domain of host proteins TRADD and, to a lower extent, FADD: arginine GlcNAcylation prevents homotypic/heterotypic death domain interactions and assembly of the oligomeric TNF-alpha receptor complex, thereby disrupting TNF signaling. Also acts on host proteins without a death domain: catalyzes arginine GlcNAcylation of host GAPDH protein, thereby preventing GAPDH interaction with TRAF2, leading to inhibit NF-kappa-B signaling. Catalyzes GlcNAcylation of host tubulin-folding cofactor TBCB, thereby promoting microtubule stability. Also mediates auto-GlcNAcylation, which is required for activity toward death domain-containing host target proteins. The sequence is that of Protein-arginine N-acetylglucosaminyltransferase SseK1 from Salmonella enteritidis (strain 2009K0958).